We begin with the raw amino-acid sequence, 208 residues long: Thymidylate kinase (208 aa).

Residue 10-17 (GPDGSGKT) coordinates ATP.

It belongs to the thymidylate kinase family.

It catalyses the reaction dTMP + ATP = dTDP + ADP. Its function is as follows. Phosphorylation of dTMP to form dTDP in both de novo and salvage pathways of dTTP synthesis. This Listeria monocytogenes serotype 4b (strain CLIP80459) protein is Thymidylate kinase.